Here is a 175-residue protein sequence, read N- to C-terminus: Ribosome maturation factor RimM (175 aa).

In terms of domain architecture, PRC barrel spans 100 to 173; that stretch reads EGEYYFHEII…TIIIRPMEGL (74 aa).

It belongs to the RimM family. Binds ribosomal protein uS19.

It localises to the cytoplasm. An accessory protein needed during the final step in the assembly of 30S ribosomal subunit, possibly for assembly of the head region. Essential for efficient processing of 16S rRNA. May be needed both before and after RbfA during the maturation of 16S rRNA. It has affinity for free ribosomal 30S subunits but not for 70S ribosomes. In Geobacillus kaustophilus (strain HTA426), this protein is Ribosome maturation factor RimM.